Reading from the N-terminus, the 286-residue chain is Aminoglycoside N(3)-acetyltransferase III (286 aa).

It belongs to the antibiotic N-acetyltransferase family.

It catalyses the reaction a 2-deoxystreptamine antibiotic + acetyl-CoA = an N(3)-acetyl-2-deoxystreptamine antibiotic + CoA + H(+). Its function is as follows. Resistance to antibiotics containing the 2-deoxy-streptamine ring including gentamicin, kanamycin, tobramycin, neomycin and apramycin. This Acinetobacter baumannii protein is Aminoglycoside N(3)-acetyltransferase III (aacC2).